The chain runs to 1516 residues: Receptor-type tyrosine-protein phosphatase S (1516 aa).

The signal sequence occupies residues 1 to 28 (MRILPSPGMPALLSLVSLLSVLLMGCVA). Residues 29–854 (ESPPVFIKKP…PQPIIDGEEG (826 aa)) lie on the Extracellular side of the membrane. Ig-like C2-type domains are found at residues 32 to 122 (PVFI…AKLT), 134 to 223 (PNID…ANLY), and 235 to 317 (PRFS…AQIT). 2 disulfide bridges follow: Cys53–Cys106 and Cys155–Cys206. An important for binding to glycosaminoglycan chains region spans residues 67 to 71 (KKGKK). 2 N-linked (GlcNAc...) asparagine glycosylation sites follow: Asn253 and Asn298. Cys256 and Cys301 are disulfide-bonded. Fibronectin type-III domains lie at 324–414 (APGT…TGEQ), 419–513 (APRN…TQQG), 517–606 (QPMN…TLQS), and 608–692 (LPKN…TAAN). The helical transmembrane segment at 855–875 (LIWVIGPVLAVVFIICIVIAI) threads the bilayer. The Cytoplasmic segment spans residues 876–1516 (LLYKNKRKDS…YLGSFDHYAT (641 aa)). Tyrosine-protein phosphatase domains lie at 961-1216 (LSQE…LLEA) and 1248-1507 (MELE…ALEY). Catalysis depends on phosphocysteine intermediate residues Cys1157 and Cys1448.

It belongs to the protein-tyrosine phosphatase family. Receptor class 2A subfamily. As to quaternary structure, homodimer. Binding to large heparan sulfate proteoglycan structures promotes oligomerization. Binding to chondroitin sulfate proteoglycan does not lead to oligomerization. Interacts (via Ig-like domains) with NTRK1 and NTRK3, but does not form detectable complexes with NTRK2. Interacts (via extracellular domain) with the heparan sulfate proteoglycans AGRN and COL18A1. A cleavage occurs, separating the extracellular domain from the transmembrane segment. This process called 'ectodomain shedding' is thought to be involved in receptor desensitization, signal transduction and/or membrane localization. Detected in embryonic brain, dorsal root ganglion and spinal cord. Detected in embryonic retina (at protein level). Detected in embryonic brain, spinal cord, dorsal root ganglion, trigeminal ganglion, ganglia associated with the precardinal vein and vagus nerve, the inner and outer nuclear layer of the retina, limb, breast muscle, heart, gut and lung.

Its subcellular location is the cell membrane. It is found in the cell projection. The protein localises to the axon. It localises to the perikaryon. The protein resides in the cytoplasmic vesicle. Its subcellular location is the secretory vesicle. It is found in the synaptic vesicle membrane. The protein localises to the synapse. It localises to the synaptosome. The protein resides in the postsynaptic density. Its subcellular location is the neuron projection. It is found in the growth cone. The catalysed reaction is O-phospho-L-tyrosyl-[protein] + H2O = L-tyrosyl-[protein] + phosphate. In terms of biological role, cell surface receptor that binds to glycosaminoglycans, including chondroitin sulfate proteoglycans and heparan sulfate proteoglycans. Binding to chondroitin sulfate and heparan sulfate proteoglycans has opposite effects on PTPRS oligomerization and regulation of neurite outgrowth. Contributes to the inhibition of neurite and axonal outgrowth by chondroitin sulfate proteoglycans, also after nerve transection. Plays a role in stimulating neurite outgrowth in response to the heparan sulfate proteoglycan GPC2. Required for normal brain development, especially for normal development of the pituitary gland and the olfactory bulb. Functions as tyrosine phosphatase. Mediates dephosphorylation of NTRK1, NTRK2 and NTRK3. Plays a role in down-regulation of signaling cascades that lead to the activation of Akt and MAP kinases. Down-regulates TLR9-mediated activation of NF-kappa-B, as well as production of TNF, interferon alpha and interferon beta. The sequence is that of Receptor-type tyrosine-protein phosphatase S (PTPRS) from Gallus gallus (Chicken).